A 217-amino-acid chain; its full sequence is Gas vesicle protein F2 (217 aa).

The protein belongs to the gas vesicle GvpF/GvpL family. Binds GvpA.

It is found in the gas vesicle. The protein localises to the cytoplasm. Functionally, a minor component of the gas vesicle, may be involved in preventing GvpA aggregation during gas vesicle nucleation. Gas vesicles are hollow, gas filled proteinaceous nanostructures found in several microbial planktonic microorganisms. They allow positioning of halobacteria at the optimal depth for growth in the poorly aerated, shallow brine pools of their habitat. In terms of biological role, expression of 2 c-vac DNA fragments containing 2 divergently transcribed regions (gvpE-gvpF-gvpG-gvpH-gvpI-gvpJ-gvpK-gvpL-gvpM and gvpA-gvpC-gvpN-gvpO) allows H.volcanii to produce gas vesicles. Note that gvpD is not necessary for gas vesicle formation. This Halobacterium salinarum (strain ATCC 700922 / JCM 11081 / NRC-1) (Halobacterium halobium) protein is Gas vesicle protein F2.